A 583-amino-acid chain; its full sequence is Transmembrane protein 108 (583 aa).

Residues 7-27 (ALYCQLLSFLLTLALTEALVF) form a helical membrane-spanning segment. Positions 31-176 (EPSPRESLQV…ATIRRPPRPP (146 aa)) are interacts with SH3GL2. Disordered stretches follow at residues 71 to 360 (VTPT…GVFA) and 376 to 404 (VPSE…STVS). 2 stretches are compositionally biased toward polar residues: residues 80–93 (PSSQ…TTTP) and 100–122 (PTNT…SLST). Positions 177 to 187 (GSSRKGAGSSP) are enriched in low complexity. Residues 180 to 413 (RKGAGSSPRP…SQAEEKAVAT (234 aa)) form an interacts with DST (isoform 1) region. 3 stretches are compositionally biased toward polar residues: residues 251-273 (YSSS…SWVP), 310-319 (ASGTPASQQR), and 333-357 (DGSS…TNSG). Residues 477-497 (IAWVILAISVPISSCSVLLTV) traverse the membrane as a helical segment. The segment at 498–583 (CCLRRKKKPA…FVGNDQVSEI (86 aa)) is interaction with CYFIP2.

In terms of assembly, interacts with DST (isoform 1). Interacts with SH3GL2. Interacts (via N-terminus) with CYFIP1 and CYFIP2; the interactions associate TMEM108 with the WAVE1 complex. Post-translationally, glycosylated.

It is found in the membrane. Its subcellular location is the postsynaptic density. The protein resides in the endosome membrane. The protein localises to the cell projection. It localises to the axon. It is found in the dendrite. Its subcellular location is the early endosome. In terms of biological role, transmembrane protein required for proper cognitive functions. Involved in the development of dentate gyrus (DG) neuron circuitry, is necessary for AMPA receptors surface expression and proper excitatory postsynaptic currents of DG granule neurons. Regulates the organization and stability of the microtubule network of sensory neurons to allow axonal transport. Through the interaction with DST, mediates the docking of the dynein/dynactin motor complex to vesicle cargos for retrograde axonal transport. In hippocampal neurons, required for BDNF-dependent dendrite outgrowth. Cooperates with SH3GL2 and recruits the WAVE1 complex to facilitate actin-dependent BDNF:NTRK2 early endocytic trafficking and mediate signaling from early endosomes. This chain is Transmembrane protein 108, found in Bos taurus (Bovine).